A 619-amino-acid polypeptide reads, in one-letter code: DNA mismatch repair protein MutL (619 aa).

The protein belongs to the DNA mismatch repair MutL/HexB family.

In terms of biological role, this protein is involved in the repair of mismatches in DNA. It is required for dam-dependent methyl-directed DNA mismatch repair. May act as a 'molecular matchmaker', a protein that promotes the formation of a stable complex between two or more DNA-binding proteins in an ATP-dependent manner without itself being part of a final effector complex. The sequence is that of DNA mismatch repair protein MutL from Myxococcus xanthus (strain DK1622).